Consider the following 284-residue polypeptide: Ribosomal RNA small subunit methyltransferase A (284 aa).

Residues asparagine 27, leucine 29, glycine 54, glutamate 75, aspartate 100, and asparagine 125 each coordinate S-adenosyl-L-methionine.

Belongs to the class I-like SAM-binding methyltransferase superfamily. rRNA adenine N(6)-methyltransferase family. RsmA subfamily.

The protein localises to the cytoplasm. The catalysed reaction is adenosine(1518)/adenosine(1519) in 16S rRNA + 4 S-adenosyl-L-methionine = N(6)-dimethyladenosine(1518)/N(6)-dimethyladenosine(1519) in 16S rRNA + 4 S-adenosyl-L-homocysteine + 4 H(+). In terms of biological role, specifically dimethylates two adjacent adenosines (A1518 and A1519) in the loop of a conserved hairpin near the 3'-end of 16S rRNA in the 30S particle. May play a critical role in biogenesis of 30S subunits. This is Ribosomal RNA small subunit methyltransferase A from Protochlamydia amoebophila (strain UWE25).